A 30-amino-acid polypeptide reads, in one-letter code: Cycloviolin-D (30 aa).

The segment at residues 1–30 (GFPCGESCVFIPCISAAIGCSCKNKVCYRN) is a cross-link (cyclopeptide (Gly-Asn)). Cystine bridges form between cysteine 4–cysteine 20, cysteine 8–cysteine 22, and cysteine 13–cysteine 27.

This is a cyclic peptide.

Functionally, probably participates in a plant defense mechanism. Has anti-HIV activity. The sequence is that of Cycloviolin-D from Leonia cymosa (Sacha uba).